Here is a 205-residue protein sequence, read N- to C-terminus: MKNLFYALKEHWQIYVGLLLGLIIGLLVGVGFTDWKSLVRGLDSKVTDWISSLSTLIIMCFTAVGVMSWKKQKTPDLKSKVAKNIIDFDTHAVLLPSKKFQSIDEIKEYNAIQLKIFWDIEHSLSTLYMFDKSNKQEIDTILGYLLKDINSATSLIEKHARYDEVGRYQLVSLINNGYKNTYPNTTKLFELVVGKSNVVGLNGSS.

A run of 2 helical transmembrane segments spans residues 12 to 32 (WQIY…GVGF) and 49 to 69 (WISS…VMSW).

The protein resides in the host membrane. This is an uncharacterized protein from Haemophilus influenzae (Bacteriophage HP1).